A 97-amino-acid polypeptide reads, in one-letter code: MSGISSKELEELKINGWIVLENGKKIKKEFRFKDFKQSVDFLKDIQPSADALDHHPDVCVYYNRVVVELTTHDVGGLTDLDYKLAIKLDELYKMKTS.

The protein belongs to the pterin-4-alpha-carbinolamine dehydratase family.

The enzyme catalyses (4aS,6R)-4a-hydroxy-L-erythro-5,6,7,8-tetrahydrobiopterin = (6R)-L-erythro-6,7-dihydrobiopterin + H2O. This Saccharolobus solfataricus (strain ATCC 35092 / DSM 1617 / JCM 11322 / P2) (Sulfolobus solfataricus) protein is Putative pterin-4-alpha-carbinolamine dehydratase.